Consider the following 131-residue polypeptide: Small ribosomal subunit protein eS8 (131 aa).

Residues M1–G42 are disordered. Over residues S16–A30 the composition is skewed to basic residues.

This sequence belongs to the eukaryotic ribosomal protein eS8 family. Part of the 30S ribosomal subunit.

This Pyrobaculum aerophilum (strain ATCC 51768 / DSM 7523 / JCM 9630 / CIP 104966 / NBRC 100827 / IM2) protein is Small ribosomal subunit protein eS8.